A 192-amino-acid chain; its full sequence is Erythropoietin (192 aa).

An N-terminal signal peptide occupies residues 1-25 (MGARDCTPLLMLSFLLFPLGFPVLG). 2 disulfides stabilise this stretch: Cys-32–Cys-187 and Cys-54–Cys-58. The N-linked (GlcNAc...) asparagine glycan is linked to Asn-49. 2 N-linked (GlcNAc...) asparagine glycosylation sites follow: Asn-63 and Asn-108.

It belongs to the EPO/TPO family. In terms of tissue distribution, produced by kidney or liver of adult mammals and by liver of fetal or neonatal mammals.

It localises to the secreted. Its function is as follows. Hormone involved in the regulation of erythrocyte proliferation and differentiation and the maintenance of a physiological level of circulating erythrocyte mass. Binds to EPOR leading to EPOR dimerization and JAK2 activation thereby activating specific downstream effectors, including STAT1 and STAT3. This is Erythropoietin (EPO) from Bos taurus (Bovine).